The primary structure comprises 316 residues: Cobalamin biosynthesis protein CobD (316 aa).

Transmembrane regions (helical) follow at residues 45 to 65 (FSPY…ALGV), 78 to 100 (PVLY…SLAF), 151 to 171 (DGVI…AMTY), 209 to 229 (LTWL…KGAL), and 291 to 311 (ISLL…FYLV).

The protein belongs to the CobD/CbiB family.

The protein resides in the cell membrane. It functions in the pathway cofactor biosynthesis; adenosylcobalamin biosynthesis. Functionally, converts cobyric acid to cobinamide by the addition of aminopropanol on the F carboxylic group. The chain is Cobalamin biosynthesis protein CobD from Streptococcus sanguinis (strain SK36).